The primary structure comprises 348 residues: Phosphate acyltransferase (348 aa).

It belongs to the PlsX family. As to quaternary structure, homodimer. Probably interacts with PlsY.

The protein localises to the cytoplasm. It catalyses the reaction a fatty acyl-[ACP] + phosphate = an acyl phosphate + holo-[ACP]. It functions in the pathway lipid metabolism; phospholipid metabolism. Functionally, catalyzes the reversible formation of acyl-phosphate (acyl-PO(4)) from acyl-[acyl-carrier-protein] (acyl-ACP). This enzyme utilizes acyl-ACP as fatty acyl donor, but not acyl-CoA. The protein is Phosphate acyltransferase of Rhizobium leguminosarum bv. trifolii (strain WSM2304).